Reading from the N-terminus, the 666-residue chain is DNA ligase (666 aa).

NAD(+)-binding positions include 31 to 35 (DKEFD), 80 to 81 (SL), and Glu110. Catalysis depends on Lys112, which acts as the N6-AMP-lysine intermediate. NAD(+) contacts are provided by Arg133, Glu170, Lys285, and Lys309. Zn(2+) is bound by residues Cys404, Cys407, Cys422, and Cys428. The region spanning 588 to 666 (GYTDKLAGQS…SEDEFLKLIS (79 aa)) is the BRCT domain.

Belongs to the NAD-dependent DNA ligase family. LigA subfamily. Mg(2+) is required as a cofactor. Requires Mn(2+) as cofactor.

It carries out the reaction NAD(+) + (deoxyribonucleotide)n-3'-hydroxyl + 5'-phospho-(deoxyribonucleotide)m = (deoxyribonucleotide)n+m + AMP + beta-nicotinamide D-nucleotide.. DNA ligase that catalyzes the formation of phosphodiester linkages between 5'-phosphoryl and 3'-hydroxyl groups in double-stranded DNA using NAD as a coenzyme and as the energy source for the reaction. It is essential for DNA replication and repair of damaged DNA. The sequence is that of DNA ligase from Bacteroides thetaiotaomicron (strain ATCC 29148 / DSM 2079 / JCM 5827 / CCUG 10774 / NCTC 10582 / VPI-5482 / E50).